We begin with the raw amino-acid sequence, 149 residues long: Large ribosomal subunit protein bL9 (149 aa).

Belongs to the bacterial ribosomal protein bL9 family.

Functionally, binds to the 23S rRNA. The protein is Large ribosomal subunit protein bL9 of Proteus mirabilis (strain HI4320).